The chain runs to 179 residues: Large ribosomal subunit protein uL5 (179 aa).

The protein belongs to the universal ribosomal protein uL5 family. In terms of assembly, part of the 50S ribosomal subunit; part of the 5S rRNA/L5/L18/L25 subcomplex. Contacts the 5S rRNA and the P site tRNA. Forms a bridge to the 30S subunit in the 70S ribosome.

Its function is as follows. This is one of the proteins that bind and probably mediate the attachment of the 5S RNA into the large ribosomal subunit, where it forms part of the central protuberance. In the 70S ribosome it contacts protein S13 of the 30S subunit (bridge B1b), connecting the 2 subunits; this bridge is implicated in subunit movement. Contacts the P site tRNA; the 5S rRNA and some of its associated proteins might help stabilize positioning of ribosome-bound tRNAs. The chain is Large ribosomal subunit protein uL5 from Paramagnetospirillum magneticum (strain ATCC 700264 / AMB-1) (Magnetospirillum magneticum).